The chain runs to 354 residues: Uroporphyrinogen decarboxylase (354 aa).

Residues 27–31 (RQAGR), Asp-77, Tyr-154, Ser-209, and His-327 contribute to the substrate site.

Belongs to the uroporphyrinogen decarboxylase family. As to quaternary structure, homodimer.

It is found in the cytoplasm. The enzyme catalyses uroporphyrinogen III + 4 H(+) = coproporphyrinogen III + 4 CO2. The protein operates within porphyrin-containing compound metabolism; protoporphyrin-IX biosynthesis; coproporphyrinogen-III from 5-aminolevulinate: step 4/4. In terms of biological role, catalyzes the decarboxylation of four acetate groups of uroporphyrinogen-III to yield coproporphyrinogen-III. This Shewanella loihica (strain ATCC BAA-1088 / PV-4) protein is Uroporphyrinogen decarboxylase.